A 339-amino-acid polypeptide reads, in one-letter code: Small ribosomal subunit protein mS27 (339 aa).

The N-terminal 37 residues, 1-37, are a transit peptide targeting the mitochondrion; that stretch reads MGTITVVINEGPILLIRALHRATTNKKMFRSTVWRRF.

Belongs to the mitochondrion-specific ribosomal protein mS27 family. In terms of assembly, component of the mitochondrial small ribosomal subunit (mt-SSU). Mature yeast 74S mitochondrial ribosomes consist of a small (37S) and a large (54S) subunit. The 37S small subunit contains a 15S ribosomal RNA (15S mt-rRNA) and 34 different proteins. The 54S large subunit contains a 21S rRNA (21S mt-rRNA) and 46 different proteins.

Its subcellular location is the mitochondrion. Its function is as follows. Component of the mitochondrial ribosome (mitoribosome), a dedicated translation machinery responsible for the synthesis of mitochondrial genome-encoded proteins, including at least some of the essential transmembrane subunits of the mitochondrial respiratory chain. The mitoribosomes are attached to the mitochondrial inner membrane and translation products are cotranslationally integrated into the membrane. The chain is Small ribosomal subunit protein mS27 (MRP13) from Saccharomyces cerevisiae (strain ATCC 204508 / S288c) (Baker's yeast).